Here is a 142-residue protein sequence, read N- to C-terminus: Large ribosomal subunit protein uL13 (142 aa).

This sequence belongs to the universal ribosomal protein uL13 family. Part of the 50S ribosomal subunit.

This protein is one of the early assembly proteins of the 50S ribosomal subunit, although it is not seen to bind rRNA by itself. It is important during the early stages of 50S assembly. The protein is Large ribosomal subunit protein uL13 of Alteromonas mediterranea (strain DSM 17117 / CIP 110805 / LMG 28347 / Deep ecotype).